Here is a 467-residue protein sequence, read N- to C-terminus: Probable Xaa-Pro aminopeptidase pepP (467 aa).

Mn(2+) is bound by residues aspartate 264, aspartate 275, glutamate 398, and glutamate 438.

It belongs to the peptidase M24B family. It depends on Mn(2+) as a cofactor.

The enzyme catalyses Release of any N-terminal amino acid, including proline, that is linked to proline, even from a dipeptide or tripeptide.. In terms of biological role, catalyzes the removal of a penultimate prolyl residue from the N-termini of peptides. This Neosartorya fischeri (strain ATCC 1020 / DSM 3700 / CBS 544.65 / FGSC A1164 / JCM 1740 / NRRL 181 / WB 181) (Aspergillus fischerianus) protein is Probable Xaa-Pro aminopeptidase pepP (pepP).